The primary structure comprises 184 residues: Ras protein let-60 (184 aa).

10-17 contributes to the GTP binding site; that stretch reads GDGGVGKS. Positions 32-40 match the Effector region motif; the sequence is YDPTIEDSY. GTP-binding positions include 57–61 and 116–119; these read DTAGQ and NKCD. The residue at position 181 (Cys181) is a Cysteine methyl ester. Residue Cys181 is the site of S-farnesyl cysteine attachment. A propeptide spans 182–184 (removed in mature form); the sequence is QIM.

This sequence belongs to the small GTPase superfamily. Ras family. In terms of assembly, interacts with soc-2. Interacts (in GTP-bound form) with plc-1 (via Ras-associating domain 1). As to expression, expressed in body wall muscles and in the nervous system including ganglion, nerve ring dorsal and ventral nerve cords, motor neurons and sensory tail neurons.

The protein resides in the cell membrane. It catalyses the reaction GTP + H2O = GDP + phosphate + H(+). GTP-binding protein with GTPase activity. The level of let-60 controls the switch between vulval and hypodermal cell fates during C.elegans vulval induction. May stimulate the guanine nucleotide exchange factor (GEF) activity of rap-1. May induce nuclear condensation. This is Ras protein let-60 from Caenorhabditis elegans.